We begin with the raw amino-acid sequence, 275 residues long: Acetyl-coenzyme A carboxylase carboxyl transferase subunit beta (275 aa).

The CoA carboxyltransferase N-terminal domain maps to 18-275 (KDNAGPAVPS…IHRLGGEMHA (258 aa)). The disordered stretch occupies residues 23–47 (PAVPSNTHSSKSNGNPVSEMKENKR). The span at 26–38 (PSNTHSSKSNGNP) shows a compositional bias: polar residues.

It belongs to the AccD/PCCB family. Acetyl-CoA carboxylase is a heterohexamer composed of biotin carboxyl carrier protein (AccB), biotin carboxylase (AccC) and two subunits each of ACCase subunit alpha (AccA) and ACCase subunit beta (AccD).

The protein localises to the cytoplasm. It carries out the reaction N(6)-carboxybiotinyl-L-lysyl-[protein] + acetyl-CoA = N(6)-biotinyl-L-lysyl-[protein] + malonyl-CoA. Its pathway is lipid metabolism; malonyl-CoA biosynthesis; malonyl-CoA from acetyl-CoA: step 1/1. In terms of biological role, component of the acetyl coenzyme A carboxylase (ACC) complex. Biotin carboxylase (BC) catalyzes the carboxylation of biotin on its carrier protein (BCCP) and then the CO(2) group is transferred by the transcarboxylase to acetyl-CoA to form malonyl-CoA. This chain is Acetyl-coenzyme A carboxylase carboxyl transferase subunit beta, found in Alkaliphilus oremlandii (strain OhILAs) (Clostridium oremlandii (strain OhILAs)).